The chain runs to 539 residues: GMP synthase [glutamine-hydrolyzing] (539 aa).

Residues 4–202 (KILILDFGSQ…VLQIAGCKPD (199 aa)) form the Glutamine amidotransferase type-1 domain. The Nucleophile role is filled by Cys81. Catalysis depends on residues His176 and Glu178. A GMPS ATP-PPase domain is found at 203 to 395 (WVMRDHIEEA…LGLPPEMVYR (193 aa)). Position 230-236 (230-236 (SGGVDSS)) interacts with ATP.

As to quaternary structure, homodimer.

It catalyses the reaction XMP + L-glutamine + ATP + H2O = GMP + L-glutamate + AMP + diphosphate + 2 H(+). Its pathway is purine metabolism; GMP biosynthesis; GMP from XMP (L-Gln route): step 1/1. Catalyzes the synthesis of GMP from XMP. This Cupriavidus taiwanensis (strain DSM 17343 / BCRC 17206 / CCUG 44338 / CIP 107171 / LMG 19424 / R1) (Ralstonia taiwanensis (strain LMG 19424)) protein is GMP synthase [glutamine-hydrolyzing].